The sequence spans 138 residues: Small ribosomal subunit protein uS12 (138 aa).

Residues 33-55 are disordered; it reads KEHTNVSSPQKRGVCTRVGTMTP. Aspartate 102 is modified (3-methylthioaspartic acid).

It belongs to the universal ribosomal protein uS12 family. In terms of assembly, part of the 30S ribosomal subunit. Contacts proteins S8 and S17. May interact with IF1 in the 30S initiation complex.

Its function is as follows. With S4 and S5 plays an important role in translational accuracy. Functionally, interacts with and stabilizes bases of the 16S rRNA that are involved in tRNA selection in the A site and with the mRNA backbone. Located at the interface of the 30S and 50S subunits, it traverses the body of the 30S subunit contacting proteins on the other side and probably holding the rRNA structure together. The combined cluster of proteins S8, S12 and S17 appears to hold together the shoulder and platform of the 30S subunit. In Bacillus licheniformis (strain ATCC 14580 / DSM 13 / JCM 2505 / CCUG 7422 / NBRC 12200 / NCIMB 9375 / NCTC 10341 / NRRL NRS-1264 / Gibson 46), this protein is Small ribosomal subunit protein uS12.